A 452-amino-acid polypeptide reads, in one-letter code: MASASIPTDPDVSTICEDFMNLLPDEPSDDFALEVTDWANDEAIGSTPGEDSTTSRTVYVERTADTAYNPRYSKRRHGRRESYHHNRPKTLVVVLPDSNHHGGRDVETGYARIERGHRRSSRSYNTQSSRKHRDRSLSNRRRRPTTPPAMTTGERNDQTHDESYRLRFSKRDARRERIRKEYDIPVDRITGRAIEVVSTAGASVTIDSVRHLDETIEKLVVRYATIQEGDSWASGGCFPGIKQNTSWPELMLYGHELYRTFESYKMDSRIARALRERVIRGESLIEALESADELLTWIKMLAAKNLPIYTNNPIVATSKSLLENLKLKLGPFVRCLLLNRDNDLGSRTLPELLRQQRFSDITCITTYMFVMIARIANIVVRGSKFVEYDDISCNVQVLQEYTPGSCLAGVLEALITHQRECGRVECTLSTWAGHLSDARPYGKYFKCSTFNC.

A disordered region spans residues 42–164 (EAIGSTPGED…RNDQTHDESY (123 aa)). Positions 98 to 107 (SNHHGGRDVE) are enriched in basic and acidic residues. Positions 129–144 (SRKHRDRSLSNRRRRP) are enriched in basic residues. Positions 154–164 (ERNDQTHDESY) are enriched in basic and acidic residues. Positions 335, 417, 421, and 426 each coordinate Zn(2+). The CHC2-type zinc-finger motif lies at 335–426 (CLLLNRDNDL…HQRECGRVEC (92 aa)).

This sequence belongs to the HHV-1 ICP27 protein family. In terms of assembly, homodimer. Homodimerization is required for transactivation. Associates in a complex with RNA, and host export factors NXF1/TAP and ALYREF; these interactions allow nuclear export of viral transcripts. Interacts with three host shuttling SR proteins SRSF1, SRSF3 and SRSF7. Interacts with host SRPK1. Interacts with IE62; this interaction enhances IE62 transactivation. Post-translationally, phosphorylated in vitro by SRPK1.

It localises to the host cytoplasm. It is found in the host nucleus. Functionally, multifunctional regulator of the expression of viral genes that mediates nuclear export of viral intronless mRNAs. This immediate early (EI) protein promotes the nuclear export of viral intronless mRNAs by interacting with mRNAs and host NXF1/TAP. This Varicella-zoster virus (strain Dumas) (HHV-3) protein is mRNA export factor ICP27 homolog.